Here is a 587-residue protein sequence, read N- to C-terminus: 5-aminolevulinate synthase, erythroid-specific, mitochondrial (587 aa).

A mitochondrion-targeting transit peptide spans 1–49 (MVAAAMLLRSCPVLSQGPTGLLGKVAKTYQFLFSIGRCPILATQGPTCS). Position 163 (R163) interacts with succinyl-CoA. Residues C258 and F259 each contribute to the pyridoxal 5'-phosphate site. 2 residues coordinate succinyl-CoA: S280 and K299. Pyridoxal 5'-phosphate-binding residues include S332, H360, and T388. Residue K391 is part of the active site. K391 carries the post-translational modification N6-(pyridoxal phosphate)lysine. Pyridoxal 5'-phosphate contacts are provided by T420 and T421. T508 is a binding site for succinyl-CoA.

The protein belongs to the class-II pyridoxal-phosphate-dependent aminotransferase family. In terms of assembly, homodimer. Interacts with SUCLA2. Pyridoxal 5'-phosphate serves as cofactor. As to expression, predomnantly expressed in erythroid cells.

It localises to the mitochondrion inner membrane. The protein resides in the mitochondrion. It carries out the reaction succinyl-CoA + glycine + H(+) = 5-aminolevulinate + CO2 + CoA. Its pathway is porphyrin-containing compound metabolism; protoporphyrin-IX biosynthesis; 5-aminolevulinate from glycine: step 1/1. Its function is as follows. Catalyzes the pyridoxal 5'-phosphate (PLP)-dependent condensation of succinyl-CoA and glycine to form aminolevulinic acid (ALA), with CoA and CO2 as by-products. Contributes significantly to heme formation during erythropoiesis. This Mus musculus (Mouse) protein is 5-aminolevulinate synthase, erythroid-specific, mitochondrial (Alas2).